Consider the following 643-residue polypeptide: Extracellular metalloproteinase 4 (643 aa).

A signal peptide spans 1–18 (MHGLLLAGLLALPLNVLA). Residues 19-254 (HPTESHSSGI…VHSVVDYVSA (236 aa)) constitute a propeptide that is removed on maturation. Basic and acidic residues predominate over residues 47–57 (TKSDAVPKQDD). The tract at residues 47 to 71 (TKSDAVPKQDDESFTTSSTGDDNVS) is disordered. Polar residues predominate over residues 60–71 (FTTSSTGDDNVS). Asparagine 271 and asparagine 420 each carry an N-linked (GlcNAc...) asparagine glycan. Residue histidine 437 participates in Zn(2+) binding. Glutamate 438 is an active-site residue. Position 441 (histidine 441) interacts with Zn(2+). Asparagine 510 is a glycosylation site (N-linked (GlcNAc...) asparagine).

The protein belongs to the peptidase M36 family. Zn(2+) is required as a cofactor.

It is found in the secreted. Secreted metalloproteinase probably acting as a virulence factor. This chain is Extracellular metalloproteinase 4 (MEP4), found in Trichophyton equinum (Horse ringworm fungus).